The sequence spans 310 residues: Tyrosine recombinase XerC (310 aa).

Positions Asn11–Val97 constitute a Core-binding (CB) domain. The region spanning Pro118–Asp298 is the Tyr recombinase domain. Catalysis depends on residues Arg157, Lys181, His250, Arg253, and His276. Tyr285 acts as the O-(3'-phospho-DNA)-tyrosine intermediate in catalysis.

It belongs to the 'phage' integrase family. XerC subfamily. As to quaternary structure, forms a cyclic heterotetrameric complex composed of two molecules of XerC and two molecules of XerD.

It is found in the cytoplasm. Functionally, site-specific tyrosine recombinase, which acts by catalyzing the cutting and rejoining of the recombining DNA molecules. The XerC-XerD complex is essential to convert dimers of the bacterial chromosome into monomers to permit their segregation at cell division. It also contributes to the segregational stability of plasmids. The protein is Tyrosine recombinase XerC of Vibrio atlanticus (strain LGP32) (Vibrio splendidus (strain Mel32)).